The primary structure comprises 596 residues: MSVKPTLSKPIGGQDASSPAVVMRRLWPYVKPLVWVLVAGVLAMAAVAATEAGIPALLKPLLDHGFGSKGDMTTKLYVPAAVVGLALARAIAQYASGYLLQYVSNRILLDLRIQMFERMIHTGVSFFQRETASTVINAVVFEVNQVLSVLMGVTITLVRDSLTVVFLLGYLFYLNWRLTLIVAILLPCIGWLVGKINRRLRRLNREHQTLTNQLAYIVEETVGGYKVVKVHNGEPYEIGRFNELSRKLRGYSMRMTVSGGLAQPLTQFLASIALAVVLTIAVVQSANDQTTVGGFVAFVTAMLLIISPLKHLMDVNQPLQRGMTAAELIFGLIDEPREPEGGGKPLARASGAIEFSHVSFSYGMSRDGRQTLDDVSFTVAPGEMVALAGPSGSGKTTLVNLLPRFFDPSSGSVRVDGVALPEYSLRDLRNQIAMVSQDVVLFNDTIAANVAYGQAPERDRVEAALRAANLWETVTAMPDGIDTLVGDNGMRLSGGQRQRLAIARAIYKDAPILILDEATSALDSESERHVQAALETLMKGRTTLVIAHRLSTIERADRILVLEGGKIVESGSHRELLEQGGLYAHLHRIQFQQDAG.

6 consecutive transmembrane segments (helical) span residues 34–54 (VWVL…EAGI), 80–100 (AAVV…GYLL), 138–158 (AVVF…ITLV), 164–184 (VVFL…IVAI), 263–283 (QPLT…IAVV), and 292–312 (VGGF…LKHL). The ABC transmembrane type-1 domain maps to 38–321 (VAGVLAMAAV…LMDVNQPLQR (284 aa)). Residues 353–589 (IEFSHVSFSY…GGLYAHLHRI (237 aa)) enclose the ABC transporter domain. 389–396 (GPSGSGKT) lines the ATP pocket.

Belongs to the ABC transporter superfamily. Lipid exporter (TC 3.A.1.106) family. As to quaternary structure, homodimer.

It is found in the cell inner membrane. It carries out the reaction ATP + H2O + lipid A-core oligosaccharideSide 1 = ADP + phosphate + lipid A-core oligosaccharideSide 2.. In terms of biological role, involved in lipopolysaccharide (LPS) biosynthesis. Translocates lipid A-core from the inner to the outer leaflet of the inner membrane. Transmembrane domains (TMD) form a pore in the inner membrane and the ATP-binding domain (NBD) is responsible for energy generation. The chain is ATP-dependent lipid A-core flippase from Burkholderia mallei (strain ATCC 23344).